The sequence spans 88 residues: Small ribosomal subunit protein uS17 (88 aa).

Belongs to the universal ribosomal protein uS17 family. As to quaternary structure, part of the 30S ribosomal subunit.

One of the primary rRNA binding proteins, it binds specifically to the 5'-end of 16S ribosomal RNA. The polypeptide is Small ribosomal subunit protein uS17 (Leuconostoc mesenteroides subsp. mesenteroides (strain ATCC 8293 / DSM 20343 / BCRC 11652 / CCM 1803 / JCM 6124 / NCDO 523 / NBRC 100496 / NCIMB 8023 / NCTC 12954 / NRRL B-1118 / 37Y)).